The sequence spans 604 residues: Glutamine--fructose-6-phosphate aminotransferase [isomerizing] (604 aa).

The active-site Nucleophile; for GATase activity is the Cys2. The 217-residue stretch at 2-218 (CGIVGVVGNT…DKELVIVKKD (217 aa)) folds into the Glutamine amidotransferase type-2 domain. SIS domains follow at residues 284–423 (IIKS…ANGK) and 456–594 (VEQL…VDKP). The active-site For Fru-6P isomerization activity is the Lys599.

As to quaternary structure, homodimer.

Its subcellular location is the cytoplasm. It carries out the reaction D-fructose 6-phosphate + L-glutamine = D-glucosamine 6-phosphate + L-glutamate. Catalyzes the first step in hexosamine metabolism, converting fructose-6P into glucosamine-6P using glutamine as a nitrogen source. The protein is Glutamine--fructose-6-phosphate aminotransferase [isomerizing] of Streptococcus agalactiae serotype V (strain ATCC BAA-611 / 2603 V/R).